Here is a 218-residue protein sequence, read N- to C-terminus: Probable GTP-binding protein EngB (218 aa).

The region spanning asparagine 21–proline 192 is the EngB-type G domain. Residues glycine 29–serine 36, glycine 56–serine 60, aspartate 75–glycine 78, threonine 142–aspartate 145, and phenylalanine 171–serine 173 each bind GTP. Serine 36 and threonine 58 together coordinate Mg(2+). Positions methionine 194–glutamate 218 are disordered.

This sequence belongs to the TRAFAC class TrmE-Era-EngA-EngB-Septin-like GTPase superfamily. EngB GTPase family. Mg(2+) is required as a cofactor.

Functionally, necessary for normal cell division and for the maintenance of normal septation. The chain is Probable GTP-binding protein EngB from Oleidesulfovibrio alaskensis (strain ATCC BAA-1058 / DSM 17464 / G20) (Desulfovibrio alaskensis).